The primary structure comprises 59 residues: Large ribosomal subunit protein bL32 (59 aa).

The disordered stretch occupies residues methionine 1 to alanine 28.

The protein belongs to the bacterial ribosomal protein bL32 family.

The protein is Large ribosomal subunit protein bL32 of Aromatoleum aromaticum (strain DSM 19018 / LMG 30748 / EbN1) (Azoarcus sp. (strain EbN1)).